A 315-amino-acid chain; its full sequence is tRNA uridine(34) hydroxylase (315 aa).

Residues 136-230 form the Rhodanese domain; that stretch reads SDPETLVIDT…YLEEIPPEES (95 aa). The Cysteine persulfide intermediate role is filled by Cys190.

This sequence belongs to the TrhO family.

The enzyme catalyses uridine(34) in tRNA + AH2 + O2 = 5-hydroxyuridine(34) in tRNA + A + H2O. Catalyzes oxygen-dependent 5-hydroxyuridine (ho5U) modification at position 34 in tRNAs. In Sinorhizobium medicae (strain WSM419) (Ensifer medicae), this protein is tRNA uridine(34) hydroxylase.